We begin with the raw amino-acid sequence, 355 residues long: Uroporphyrinogen decarboxylase (355 aa).

Substrate-binding positions include 27-31 (RQAGR), aspartate 78, tyrosine 155, serine 210, and histidine 328.

Belongs to the uroporphyrinogen decarboxylase family. In terms of assembly, homodimer.

The protein localises to the cytoplasm. It carries out the reaction uroporphyrinogen III + 4 H(+) = coproporphyrinogen III + 4 CO2. It functions in the pathway porphyrin-containing compound metabolism; protoporphyrin-IX biosynthesis; coproporphyrinogen-III from 5-aminolevulinate: step 4/4. Its function is as follows. Catalyzes the decarboxylation of four acetate groups of uroporphyrinogen-III to yield coproporphyrinogen-III. This Azotobacter vinelandii (strain DJ / ATCC BAA-1303) protein is Uroporphyrinogen decarboxylase.